The sequence spans 128 residues: Keratin-associated protein 2-1 (128 aa).

The 10 X 5 AA repeats of C-C-[CDPQRWG]-[APRS]-[CIPSTVD] stretch occupies residues 5–112 (CCGSTFSSLS…SVQSPCCRPP (108 aa)).

The protein belongs to the KRTAP type 2 family. In terms of assembly, interacts with hair keratins.

In terms of biological role, in the hair cortex, hair keratin intermediate filaments are embedded in an interfilamentous matrix, consisting of hair keratin-associated proteins (KRTAP), which are essential for the formation of a rigid and resistant hair shaft through their extensive disulfide bond cross-linking with abundant cysteine residues of hair keratins. The matrix proteins include the high-sulfur and high-glycine-tyrosine keratins. The chain is Keratin-associated protein 2-1 (KRTAP2-1) from Homo sapiens (Human).